A 177-amino-acid polypeptide reads, in one-letter code: Large ribosomal subunit protein uL6 (177 aa).

This sequence belongs to the universal ribosomal protein uL6 family. In terms of assembly, part of the 50S ribosomal subunit.

Functionally, this protein binds to the 23S rRNA, and is important in its secondary structure. It is located near the subunit interface in the base of the L7/L12 stalk, and near the tRNA binding site of the peptidyltransferase center. This is Large ribosomal subunit protein uL6 from Cupriavidus taiwanensis (strain DSM 17343 / BCRC 17206 / CCUG 44338 / CIP 107171 / LMG 19424 / R1) (Ralstonia taiwanensis (strain LMG 19424)).